The primary structure comprises 396 residues: DNA polymerase IV (396 aa).

The 181-residue stretch at 2–182 (ILHVDMDAFY…LPVSRLWGVG (181 aa)) folds into the UmuC domain. Residues Asp6 and Asp100 each contribute to the Mg(2+) site. The active site involves Glu101.

This sequence belongs to the DNA polymerase type-Y family. Monomer. Mg(2+) is required as a cofactor.

The protein resides in the cytoplasm. It catalyses the reaction DNA(n) + a 2'-deoxyribonucleoside 5'-triphosphate = DNA(n+1) + diphosphate. Functionally, poorly processive, error-prone DNA polymerase involved in untargeted mutagenesis. Copies undamaged DNA at stalled replication forks, which arise in vivo from mismatched or misaligned primer ends. These misaligned primers can be extended by PolIV. Exhibits no 3'-5' exonuclease (proofreading) activity. May be involved in translesional synthesis, in conjunction with the beta clamp from PolIII. This Rhodopirellula baltica (strain DSM 10527 / NCIMB 13988 / SH1) protein is DNA polymerase IV.